A 71-amino-acid chain; its full sequence is DNA-directed RNA polymerase subunit epsilon (71 aa).

This sequence belongs to the RNA polymerase subunit epsilon family. As to quaternary structure, RNAP is composed of a core of 2 alpha, a beta and a beta' subunit. The core is associated with a delta subunit, and at least one of epsilon or omega. When a sigma factor is associated with the core the holoenzyme is formed, which can initiate transcription.

The enzyme catalyses RNA(n) + a ribonucleoside 5'-triphosphate = RNA(n+1) + diphosphate. Functionally, a non-essential component of RNA polymerase (RNAP). The protein is DNA-directed RNA polymerase subunit epsilon of Geobacillus kaustophilus (strain HTA426).